A 381-amino-acid polypeptide reads, in one-letter code: Ceropsin (381 aa).

Topologically, residues 1–62 (MSISMDAGPG…MNPLWHALLG (62 aa)) are extracellular. Asparagine 28 is a glycosylation site (N-linked (GlcNAc...) asparagine). Residues 63 to 83 (FTIGVLGFISMMGNGMVIYIF) traverse the membrane as a helical segment. The Cytoplasmic segment spans residues 84 to 96 (MTTKNLKTPSNLL). Residues 97–117 (VVNLAFSDFLMMCAMSPAMVI) form a helical membrane-spanning segment. Residues 118–133 (NCYNETWVFGPFACEL) lie on the Extracellular side of the membrane. An N-linked (GlcNAc...) asparagine glycan is attached at asparagine 121. Cysteine 131 and cysteine 208 are disulfide-bonded. Residues 134–154 (YGCAGSLFGCASIWTMTMIAF) form a helical membrane-spanning segment. The Cytoplasmic segment spans residues 155 to 173 (DRYNVIVKGIAAKPMTNNG). Residues 174-194 (ALLRILGIWAFSLAWTVAPFF) traverse the membrane as a helical segment. At 195-221 (GWNRYVPEGNMTACGTDYLTKDWFSRS) the chain is on the extracellular side. An N-linked (GlcNAc...) asparagine glycan is attached at asparagine 204. A helical transmembrane segment spans residues 222 to 242 (YIVVYSVFVYFAPLLLIVYSY). The Cytoplasmic portion of the chain corresponds to 243 to 284 (YYIVQAVSAHEKAMREQAKKMNVASLRSSEAANTSTECKLAK). The chain crosses the membrane as a helical span at residues 285-305 (VALMTISLWFMAWTPYLVINY). Topologically, residues 306–316 (TGILESAPISP) are extracellular. A helical transmembrane segment spans residues 317-339 (LATIWGSLFAKANAVYNPIVYGI). The Cytoplasmic portion of the chain corresponds to 340–381 (SHPKYQAALYKRFPVLQCHSTTTDEASSVASGTTVMEEKPTA).

The protein belongs to the G-protein coupled receptor 1 family. Opsin subfamily. In terms of tissue distribution, expressed bilaterally in dorsal and ventral anterior protocerebral cells and bilaterally in the dorsal posterior protocerebral and lateral posterior tritocerebral cells (at protein level). Expressed in the larval brain but not in the subesophageal ganglion or thoracic ganglion.

It is found in the membrane. Functionally, visual pigments are the light-absorbing molecules that mediate vision. They consist of an apoprotein, opsin, covalently linked to cis-retinal. May play a role in photoperiodic photoreception. This is Ceropsin from Bombyx mori (Silk moth).